An 861-amino-acid chain; its full sequence is Leucine--tRNA ligase (861 aa).

A 'HIGH' region motif is present at residues 42-52; that stretch reads PYPSGRLHMGH. The 'KMSKS' region signature appears at 619-623; that stretch reads KMSKS. Lysine 622 is a binding site for ATP.

Belongs to the class-I aminoacyl-tRNA synthetase family.

It is found in the cytoplasm. The catalysed reaction is tRNA(Leu) + L-leucine + ATP = L-leucyl-tRNA(Leu) + AMP + diphosphate. This is Leucine--tRNA ligase from Haemophilus influenzae (strain 86-028NP).